We begin with the raw amino-acid sequence, 499 residues long: Calcium/calmodulin-dependent protein kinase type II subunit delta (499 aa).

Ala-2 carries the post-translational modification N-acetylalanine. Residues 14–272 enclose the Protein kinase domain; sequence YQLFEELGKG…ASEALKHPWI (259 aa). Residues 20-28 and Lys-43 contribute to the ATP site; that span reads LGKGAFSVV. The Proton acceptor role is filled by Asp-136. The interval 283-292 is autoinhibitory domain; sequence HRQETVDCLK. Thr-287 is subject to Phosphothreonine; by autocatalysis. Positions 291–301 are calmodulin-binding; the sequence is LKKFNARRKLK. Phosphothreonine; by autocatalysis is present on residues Thr-306 and Thr-307. Ser-315 is modified (phosphoserine). The residue at position 318 (Lys-318) is an N6-acetyllysine. Residues Ser-319 and Ser-330 each carry the phosphoserine modification. Thr-331 is subject to Phosphothreonine. Residue Ser-333 is modified to Phosphoserine. Phosphothreonine occurs at positions 336 and 337. Phosphoserine is present on residues Ser-404, Ser-490, and Ser-494.

The protein belongs to the protein kinase superfamily. CAMK Ser/Thr protein kinase family. CaMK subfamily. CAMK2 is composed of 4 different chains: alpha (CAMK2A), beta (CAMK2B), gamma (CAMK2G), and delta (CAMK2D). The different isoforms assemble into homo- or heteromultimeric holoenzymes composed of 12 subunits with two hexameric rings stacked one on top of the other. Interacts with RRAD and CACNB2. Autophosphorylation of Thr-287 following activation by Ca(2+)/calmodulin. Phosphorylation of Thr-287 locks the kinase into an activated state. In terms of tissue distribution, expressed in cardiac muscle and skeletal muscle. Isoform Delta 3, isoform Delta 2, isoform Delta 8 and isoform Delta 9 are expressed in cardiac muscle. Isoform Delta 11 is expressed in skeletal muscle.

Its subcellular location is the cell membrane. It is found in the sarcolemma. The protein localises to the sarcoplasmic reticulum membrane. It catalyses the reaction L-seryl-[protein] + ATP = O-phospho-L-seryl-[protein] + ADP + H(+). It carries out the reaction L-threonyl-[protein] + ATP = O-phospho-L-threonyl-[protein] + ADP + H(+). With respect to regulation, activated by Ca(2+)/calmodulin. Binding of calmodulin results in conformational change that relieves intrasteric autoinhibition and allows autophosphorylation of Thr-287 which turns the kinase in a constitutively active form and confers to the kinase a Ca(2+)-independent activity. Calcium/calmodulin-dependent protein kinase involved in the regulation of Ca(2+) homeostatis and excitation-contraction coupling (ECC) in heart by targeting ion channels, transporters and accessory proteins involved in Ca(2+) influx into the myocyte, Ca(2+) release from the sarcoplasmic reticulum (SR), SR Ca(2+) uptake and Na(+) and K(+) channel transport. Targets also transcription factors and signaling molecules to regulate heart function. In its activated form, is involved in the pathogenesis of dilated cardiomyopathy and heart failure. Contributes to cardiac decompensation and heart failure by regulating SR Ca(2+) release via direct phosphorylation of RYR2 Ca(2+) channel on 'Ser-2808'. In the nucleus, phosphorylates the MEF2 repressor HDAC4, promoting its nuclear export and binding to 14-3-3 protein, and expression of MEF2 and genes involved in the hypertrophic program. Is essential for left ventricular remodeling responses to myocardial infarction. In pathological myocardial remodeling acts downstream of the beta adrenergic receptor signaling cascade to regulate key proteins involved in ECC. Regulates Ca(2+) influx to myocytes by binding and phosphorylating the L-type Ca(2+) channel subunit beta-2 CACNB2. In addition to Ca(2+) channels, can target and regulate the cardiac sarcolemmal Na(+) channel Nav1.5/SCN5A and the K+ channel Kv4.3/KCND3, which contribute to arrhythmogenesis in heart failure. Phosphorylates phospholamban (PLN/PLB), an endogenous inhibitor of SERCA2A/ATP2A2, contributing to the enhancement of SR Ca(2+) uptake that may be important in frequency-dependent acceleration of relaxation (FDAR) and maintenance of contractile function during acidosis. May participate in the modulation of skeletal muscle function in response to exercise, by regulating SR Ca(2+) transport through phosphorylation of PLN/PLB and triadin, a ryanodine receptor-coupling factor. In response to interferon-gamma (IFN-gamma) stimulation, catalyzes phosphorylation of STAT1, stimulating the JAK-STAT signaling pathway. The chain is Calcium/calmodulin-dependent protein kinase type II subunit delta (CAMK2D) from Homo sapiens (Human).